Here is a 127-residue protein sequence, read N- to C-terminus: Glycine cleavage system H protein (127 aa).

Residues Thr23 to Thr104 form the Lipoyl-binding domain. Lys64 carries the N6-lipoyllysine modification.

This sequence belongs to the GcvH family. As to quaternary structure, the glycine cleavage system is composed of four proteins: P, T, L and H. (R)-lipoate is required as a cofactor.

The glycine cleavage system catalyzes the degradation of glycine. The H protein shuttles the methylamine group of glycine from the P protein to the T protein. This Lachnoclostridium phytofermentans (strain ATCC 700394 / DSM 18823 / ISDg) (Clostridium phytofermentans) protein is Glycine cleavage system H protein.